Consider the following 125-residue polypeptide: Holo-[acyl-carrier-protein] synthase (125 aa).

Residues D8 and E60 each contribute to the Mg(2+) site.

The protein belongs to the P-Pant transferase superfamily. AcpS family. It depends on Mg(2+) as a cofactor.

It is found in the cytoplasm. It carries out the reaction apo-[ACP] + CoA = holo-[ACP] + adenosine 3',5'-bisphosphate + H(+). In terms of biological role, transfers the 4'-phosphopantetheine moiety from coenzyme A to a Ser of acyl-carrier-protein. The sequence is that of Holo-[acyl-carrier-protein] synthase from Wolbachia sp. subsp. Brugia malayi (strain TRS).